The primary structure comprises 190 residues: Glutathione peroxidase 2 (190 aa).

Sec-40 is a catalytic residue. A non-standard amino acid (selenocysteine) is located at residue Sec-40.

Belongs to the glutathione peroxidase family. As to quaternary structure, homotetramer.

It is found in the cytoplasm. It localises to the cytosol. It catalyses the reaction 2 glutathione + H2O2 = glutathione disulfide + 2 H2O. The enzyme catalyses a hydroperoxy polyunsaturated fatty acid + 2 glutathione = a hydroxy polyunsaturated fatty acid + glutathione disulfide + H2O. It carries out the reaction tert-butyl hydroperoxide + 2 glutathione = tert-butanol + glutathione disulfide + H2O. The catalysed reaction is cumene hydroperoxide + 2 glutathione = 2-phenylpropan-2-ol + glutathione disulfide + H2O. It catalyses the reaction (13S)-hydroperoxy-(9Z,11E)-octadecadienoate + 2 glutathione = (13S)-hydroxy-(9Z,11E)-octadecadienoate + glutathione disulfide + H2O. The enzyme catalyses (5S)-hydroperoxy-(6E,8Z,11Z,14Z)-eicosatetraenoate + 2 glutathione = (5S)-hydroxy-(6E,8Z,11Z,14Z)-eicosatetraenoate + glutathione disulfide + H2O. It carries out the reaction (12R)-hydroperoxy-(5Z,8Z,10E,14Z)-eicosatetraenoate + 2 glutathione = (12R)-hydroxy-(5Z,8Z,10E,14Z)-eicosatetraenoate + glutathione disulfide + H2O. The catalysed reaction is (15S)-hydroperoxy-(5Z,8Z,11Z,13E)-eicosatetraenoate + 2 glutathione = (15S)-hydroxy-(5Z,8Z,11Z,13E)-eicosatetraenoate + glutathione disulfide + H2O. In terms of biological role, catalyzes the reduction of hydroperoxides in a glutathione-dependent manner thus regulating cellular redox homeostasis. Can reduce small soluble hydroperoxides such as H2O2, cumene hydroperoxide and tert-butyl hydroperoxide, as well as several fatty acid-derived hydroperoxides. Cannot reduce phosphatidycholine hydroperoxide. The sequence is that of Glutathione peroxidase 2 (GPX2) from Pongo pygmaeus (Bornean orangutan).